The primary structure comprises 280 residues: MCSAFHRAESGTELLARLEGRSSLKEIEPNLFADEDSPVHGDILEFHGPEGTGKTEMLYHLTARCILPKSEGGLEVEVLFIDTDYHFDMLRLVTILEHRLSQSSEEIIKYCLGRFFLVYCSSSTHLLLTLYSLESMFCSHPSLCLLILDSLSAFYWIDRVNGGESVNLQESTLRKCSQCLEKLVNDYRLVLFATTQTIMQKASSSSEEPSHASRRLCDVDIDYRPYLCKAWQQLVKHRMFFSKQDDSQSSNQFSLVSRCLKSNSLKKHFFIIGESGVEFC.

Residue Ser-10 is modified to Phosphoserine.

It belongs to the RecA family. RAD51 subfamily. In terms of assembly, interacts with RAD51D. Part of the BCDX2 complex consisting of RAD51B, RAD51C, RAD51D and XRCC2; the complex has a ring-like structure arranged into a flat disk around a central channel. In the absence of DNA, the BCDX2 subcomplex XRCC2:RAD51D formed a multimeric ring structure; in the presence of single-stranded DNA it formed a filamentous structure with the ssDNA.

It localises to the nucleus. Its subcellular location is the cytoplasm. The protein localises to the cytoskeleton. It is found in the microtubule organizing center. The protein resides in the centrosome. Functionally, involved in the homologous recombination repair (HRR) pathway of double-stranded DNA, thought to repair chromosomal fragmentation, translocations and deletions. Part of the RAD51 paralog protein complex BCDX2 which acts in the BRCA1-BRCA2-dependent HR pathway. Upon DNA damage, BCDX2 acts downstream of BRCA2 recruitment and upstream of RAD51 recruitment. BCDX2 binds predominantly to the intersection of the four duplex arms of the Holliday junction and to junction of replication forks. The BCDX2 complex was originally reported to bind single-stranded DNA, single-stranded gaps in duplex DNA and specifically to nicks in duplex DNA. This Homo sapiens (Human) protein is DNA repair protein XRCC2 (XRCC2).